Reading from the N-terminus, the 363-residue chain is Ferredoxin--NADP reductase, cyanelle (363 aa).

The N-terminal 65 residues, 1 to 65 (MAFVASVPVF…TFEVDTTIRA (65 aa)), are a transit peptide targeting the cyanelle. Positions 84-206 (ANPYIGKCIY…TGPVGTTMLM (123 aa)) constitute an FAD-binding FR-type domain. Residues 142–145 (RLYS), 163–165 (SVK), Y169, 180–182 (VCS), and T221 contribute to the FAD site. NADP(+) is bound by residues S145 and K165. NADP(+)-binding positions include T221, 253–254 (VP), 283–284 (SR), K293, 322–323 (GL), and E361.

The protein belongs to the ferredoxin--NADP reductase type 1 family. Requires FAD as cofactor.

The protein localises to the plastid. It is found in the cyanelle stroma. It localises to the cyanelle thylakoid membrane. The catalysed reaction is 2 reduced [2Fe-2S]-[ferredoxin] + NADP(+) + H(+) = 2 oxidized [2Fe-2S]-[ferredoxin] + NADPH. Functionally, may play a key role in regulating the relative amounts of cyclic and non-cyclic electron flow to meet the demands of the plant for ATP and reducing power. The chain is Ferredoxin--NADP reductase, cyanelle (PETH) from Cyanophora paradoxa.